A 287-amino-acid chain; its full sequence is ATP synthase gamma chain (287 aa).

It belongs to the ATPase gamma chain family. As to quaternary structure, F-type ATPases have 2 components, CF(1) - the catalytic core - and CF(0) - the membrane proton channel. CF(1) has five subunits: alpha(3), beta(3), gamma(1), delta(1), epsilon(1). CF(0) has three main subunits: a, b and c.

Its subcellular location is the cell inner membrane. Produces ATP from ADP in the presence of a proton gradient across the membrane. The gamma chain is believed to be important in regulating ATPase activity and the flow of protons through the CF(0) complex. In Stenotrophomonas maltophilia (strain R551-3), this protein is ATP synthase gamma chain.